Here is a 341-residue protein sequence, read N- to C-terminus: tRNA N6-adenosine threonylcarbamoyltransferase (341 aa).

2 residues coordinate Fe cation: histidine 113 and histidine 117. Substrate contacts are provided by residues 141 to 145 (LVSGG), aspartate 174, glycine 187, and asparagine 282. Residue aspartate 310 participates in Fe cation binding.

This sequence belongs to the KAE1 / TsaD family. It depends on Fe(2+) as a cofactor.

The protein localises to the cytoplasm. The catalysed reaction is L-threonylcarbamoyladenylate + adenosine(37) in tRNA = N(6)-L-threonylcarbamoyladenosine(37) in tRNA + AMP + H(+). In terms of biological role, required for the formation of a threonylcarbamoyl group on adenosine at position 37 (t(6)A37) in tRNAs that read codons beginning with adenine. Is involved in the transfer of the threonylcarbamoyl moiety of threonylcarbamoyl-AMP (TC-AMP) to the N6 group of A37, together with TsaE and TsaB. TsaD likely plays a direct catalytic role in this reaction. In Porphyromonas gingivalis (strain ATCC BAA-308 / W83), this protein is tRNA N6-adenosine threonylcarbamoyltransferase.